A 294-amino-acid polypeptide reads, in one-letter code: MAGMKEIRGKIKSVQNTRKITKAMEMVAASKMRRAQERMRAARPYADKVRDIAAHMSRANPEYRHPFMVSNEGAKAAGIILVTTDKGLCGGMNTNVLRASLQKFKELEGQGKTIEATAIGTKGLGFLNRLRAKVVSNVVHLGDTPHLEKLIGAVKVQLDLYSEGKVSAVYLAYTRFVNTMKQEPVIEQLLPLSADQFERKEEDGATPSTQWDYIYEPDAQAVVDELLVRYVEALVYQAVAENMASEQSARMVAMKAASDNAKTVINELQLVYNKSRQAAITKELSEIVGGAAAV.

It belongs to the ATPase gamma chain family. In terms of assembly, F-type ATPases have 2 components, CF(1) - the catalytic core - and CF(0) - the membrane proton channel. CF(1) has five subunits: alpha(3), beta(3), gamma(1), delta(1), epsilon(1). CF(0) has three main subunits: a, b and c.

It is found in the cell inner membrane. Functionally, produces ATP from ADP in the presence of a proton gradient across the membrane. The gamma chain is believed to be important in regulating ATPase activity and the flow of protons through the CF(0) complex. This is ATP synthase gamma chain from Paraburkholderia phytofirmans (strain DSM 17436 / LMG 22146 / PsJN) (Burkholderia phytofirmans).